Reading from the N-terminus, the 441-residue chain is 3-phosphoshikimate 1-carboxyvinyltransferase (441 aa).

The disordered stretch occupies residues 1–24 (MSGTGQSDDPRELKAGGSLQGRVK). The 3-phosphoshikimate site is built by lysine 29, serine 30, and arginine 34. Phosphoenolpyruvate is bound at residue lysine 29. Residues glycine 103 and arginine 132 each contribute to the phosphoenolpyruvate site. 3-phosphoshikimate contacts are provided by serine 177, glutamine 179, aspartate 328, and lysine 355. Phosphoenolpyruvate is bound at residue glutamine 179. Aspartate 328 (proton acceptor) is an active-site residue. 2 residues coordinate phosphoenolpyruvate: arginine 359 and arginine 401.

It belongs to the EPSP synthase family. As to quaternary structure, monomer.

It localises to the cytoplasm. It carries out the reaction 3-phosphoshikimate + phosphoenolpyruvate = 5-O-(1-carboxyvinyl)-3-phosphoshikimate + phosphate. The protein operates within metabolic intermediate biosynthesis; chorismate biosynthesis; chorismate from D-erythrose 4-phosphate and phosphoenolpyruvate: step 6/7. Its function is as follows. Catalyzes the transfer of the enolpyruvyl moiety of phosphoenolpyruvate (PEP) to the 5-hydroxyl of shikimate-3-phosphate (S3P) to produce enolpyruvyl shikimate-3-phosphate and inorganic phosphate. In Synechococcus sp. (strain CC9605), this protein is 3-phosphoshikimate 1-carboxyvinyltransferase.